The chain runs to 778 residues: Jhy protein homolog (778 aa).

4 disordered regions span residues 62 to 271, 334 to 408, 631 to 654, and 721 to 746; these read DRIR…PKTD, QYES…LDTS, EKGK…QKRD, and IPKP…AGKE. Residues 118–139 show a composition bias toward basic and acidic residues; the sequence is PIEDKYSDLRYDPNWKSKKEEG. Over residues 223–234 the composition is skewed to low complexity; that stretch reads SSLSPYVKSSSS. The span at 334-344 shows a compositional bias: polar residues; it reads QYESTKSSNVP. Basic residues predominate over residues 358 to 371; the sequence is SRRPAKLKIRKQCK. A compositionally biased stretch (polar residues) spans 375-389; it reads GLKSSTTEEVTASQG. Positions 390-402 are enriched in low complexity; the sequence is NQNNPPRQQQNQN. A compositionally biased stretch (basic residues) spans 633–650; the sequence is GKKHKKRSSSKNTKLKGY. Over residues 733-746 the composition is skewed to basic and acidic residues; that stretch reads ASKEQKNPTYAGKE.

Functionally, required for the normal development of cilia in brain ependymal cells lining the ventricular surfaces. This is Jhy protein homolog from Homo sapiens (Human).